The sequence spans 220 residues: UPF0758 protein Asuc_0013 (220 aa).

The 123-residue stretch at Glu98 to Leu220 folds into the MPN domain. Zn(2+) contacts are provided by His169, His171, and Asp182. The JAMM motif signature appears at His169–Asp182.

This sequence belongs to the UPF0758 family.

In Actinobacillus succinogenes (strain ATCC 55618 / DSM 22257 / CCUG 43843 / 130Z), this protein is UPF0758 protein Asuc_0013.